A 376-amino-acid chain; its full sequence is Glutamate 5-kinase (376 aa).

Residue Lys15 participates in ATP binding. Residues Ser55, Asp142, and Asn154 each coordinate substrate. ATP-binding positions include Thr174 to Asp175 and Thr216 to Lys222. The region spanning Ala281 to Arg359 is the PUA domain.

Belongs to the glutamate 5-kinase family.

It is found in the cytoplasm. It catalyses the reaction L-glutamate + ATP = L-glutamyl 5-phosphate + ADP. It participates in amino-acid biosynthesis; L-proline biosynthesis; L-glutamate 5-semialdehyde from L-glutamate: step 1/2. Catalyzes the transfer of a phosphate group to glutamate to form L-glutamate 5-phosphate. In Trichlorobacter lovleyi (strain ATCC BAA-1151 / DSM 17278 / SZ) (Geobacter lovleyi), this protein is Glutamate 5-kinase.